The chain runs to 341 residues: MKQVFLWLIFVLAFHKLLAEKIGDIASVVGVRDNQLIGYGLVIGLNGTGDKSGSKFTMQSISNMLESVNVKISADDIKSKNVAAVMITASLPPFARQGDKIDIHISSIGDAKSIQGGTLVMTPLNAVDGNIYALAQGSITSGNSNNLLSANIINGATIEREVSYDLFHKNAMVLSLKNPNFKNAIQVQNALNKVFNKRIAMALDPKTIQITRPERFSMVEFLAIVQEIPINYSAKNKIIVDEKSGTIVSGVDIIVHPIVVTSQDITLKITKEPLNDSKNVQDLDSMSLDTAHNTLSSNGKNITIAGVMKALQKIGVSAKGIVSILQALKKSGAISAEMEIL.

Residues 1-19 (MKQVFLWLIFVLAFHKLLA) form the signal peptide.

This sequence belongs to the FlgI family. The basal body constitutes a major portion of the flagellar organelle and consists of four rings (L,P,S, and M) mounted on a central rod.

It localises to the periplasm. The protein localises to the bacterial flagellum basal body. Its function is as follows. Assembles around the rod to form the L-ring and probably protects the motor/basal body from shearing forces during rotation. This chain is Flagellar P-ring protein, found in Helicobacter acinonychis (strain Sheeba).